The sequence spans 441 residues: ATP-dependent RNA helicase sub2 (441 aa).

A compositionally biased stretch (low complexity) spans 23–32 (TTAAPAANGD). Residues 23 to 42 (TTAAPAANGDAAKKGDLTVS) are disordered. The Q motif signature appears at 58–86 (TGFRDFLLKGELLRAITDCGFEHPSEVQQ). Positions 89–264 (IPTAILNVDV…KKFMRNPLEV (176 aa)) constitute a Helicase ATP-binding domain. An ATP-binding site is contributed by 102 to 109 (AKSGLGKT). A DECD box motif is present at residues 211–214 (DECD). The Helicase C-terminal domain occupies 292–437 (KLNELLDSLE…EYPEGGVDSS (146 aa)).

Belongs to the DEAD box helicase family. DECD subfamily.

It is found in the nucleus. It carries out the reaction ATP + H2O = ADP + phosphate + H(+). Functionally, ATP-binding RNA helicase involved in transcription elongation and required for the export of mRNA out of the nucleus. SUB2 also plays a role in pre-mRNA splicing and spliceosome assembly. May be involved in rDNA and telomeric silencing, and maintenance of genome integrity. This is ATP-dependent RNA helicase sub2 (sub2) from Aspergillus oryzae (strain ATCC 42149 / RIB 40) (Yellow koji mold).